The sequence spans 251 residues: Capsid protein (251 aa).

The interval Met-1–Ala-27 is disordered. Positions Lys-3–Asn-20 match the Bipartite nuclear localization signal motif. The span at Pro-12–Tyr-23 shows a compositional bias: polar residues. A Nuclear localization signal motif is present at residues Lys-35–Arg-49. A zinc finger lies at Cys-63 to His-80. The Nuclear export signal motif lies at Ile-96–Met-117. A Bipartite nuclear localization signal motif is present at residues Lys-195 to Arg-242.

It belongs to the geminiviridae capsid protein family. In terms of assembly, homomultimer. Binds to single-stranded and double-stranded viral DNA. Interacts (via nuclear localization signals) with host importin alpha-1a.

The protein localises to the virion. The protein resides in the host nucleus. In terms of biological role, encapsidates the viral DNA into characteristic twinned ('geminate') particles. Binds the genomic viral ssDNA and shuttles it into and out of the cell nucleus. The CP of bipartite geminiviruses is not required for cell-to-cell or systemic movement. The sequence is that of Capsid protein from Abutilon (Upland cotton).